The chain runs to 481 residues: Tryptophan biosynthesis protein TrpCF (481 aa).

An indole-3-glycerol phosphate synthase region spans residues 1–283; it reads MKMTDFNTQQ…LAVRKVTLGE (283 aa). The tract at residues 284–481 is N-(5'-phosphoribosyl)anthranilate isomerase; sequence NKVCGLTHPD…QAAFHAIRNY (198 aa).

In the N-terminal section; belongs to the TrpC family. The protein in the C-terminal section; belongs to the TrpF family. Monomer.

It catalyses the reaction N-(5-phospho-beta-D-ribosyl)anthranilate = 1-(2-carboxyphenylamino)-1-deoxy-D-ribulose 5-phosphate. The enzyme catalyses 1-(2-carboxyphenylamino)-1-deoxy-D-ribulose 5-phosphate + H(+) = (1S,2R)-1-C-(indol-3-yl)glycerol 3-phosphate + CO2 + H2O. Its pathway is amino-acid biosynthesis; L-tryptophan biosynthesis; L-tryptophan from chorismate: step 3/5. The protein operates within amino-acid biosynthesis; L-tryptophan biosynthesis; L-tryptophan from chorismate: step 4/5. Its function is as follows. Bifunctional enzyme that catalyzes two sequential steps of tryptophan biosynthetic pathway. The first reaction is catalyzed by the isomerase, coded by the TrpF domain; the second reaction is catalyzed by the synthase, coded by the TrpC domain. This is Tryptophan biosynthesis protein TrpCF (trpC) from Vibrio parahaemolyticus serotype O3:K6 (strain RIMD 2210633).